Reading from the N-terminus, the 200-residue chain is Oligoribonuclease (200 aa).

The Exonuclease domain maps to 20–183 (LVWLDMEMTG…ADIHESIDEL (164 aa)). The active site involves Tyr141.

The protein belongs to the oligoribonuclease family.

The protein resides in the cytoplasm. 3'-to-5' exoribonuclease specific for small oligoribonucleotides. This is Oligoribonuclease from Burkholderia vietnamiensis (strain G4 / LMG 22486) (Burkholderia cepacia (strain R1808)).